Here is a 151-residue protein sequence, read N- to C-terminus: Ribosome maturation factor RimP (151 aa).

The protein belongs to the RimP family.

The protein resides in the cytoplasm. In terms of biological role, required for maturation of 30S ribosomal subunits. The chain is Ribosome maturation factor RimP from Shewanella putrefaciens (strain CN-32 / ATCC BAA-453).